The following is a 325-amino-acid chain: Biotin synthase (325 aa).

Residues 46–270 (NNSNNIDLCS…IAICKLILPN (225 aa)) form the Radical SAM core domain. [4Fe-4S] cluster-binding residues include Cys-64, Cys-68, and Cys-71. [2Fe-2S] cluster contacts are provided by Ser-107, Cys-139, Cys-198, and Arg-274.

The protein belongs to the radical SAM superfamily. Biotin synthase family. In terms of assembly, homodimer. Requires [4Fe-4S] cluster as cofactor. It depends on [2Fe-2S] cluster as a cofactor.

The enzyme catalyses (4R,5S)-dethiobiotin + (sulfur carrier)-SH + 2 reduced [2Fe-2S]-[ferredoxin] + 2 S-adenosyl-L-methionine = (sulfur carrier)-H + biotin + 2 5'-deoxyadenosine + 2 L-methionine + 2 oxidized [2Fe-2S]-[ferredoxin]. The protein operates within cofactor biosynthesis; biotin biosynthesis; biotin from 7,8-diaminononanoate: step 2/2. Its function is as follows. Catalyzes the conversion of dethiobiotin (DTB) to biotin by the insertion of a sulfur atom into dethiobiotin via a radical-based mechanism. The protein is Biotin synthase of Methanococcus aeolicus (strain ATCC BAA-1280 / DSM 17508 / OCM 812 / Nankai-3).